A 376-amino-acid chain; its full sequence is Chaperone protein DnaJ (376 aa).

The region spanning 5–70 (DFYEVLGVER…SKRAAYDQYG (66 aa)) is the J domain. The CR-type zinc-finger motif lies at 135 to 213 (GTTVTIRVPT…CHGQGRVEEQ (79 aa)). 8 residues coordinate Zn(2+): Cys-148, Cys-151, Cys-165, Cys-168, Cys-187, Cys-190, Cys-201, and Cys-204. 4 CXXCXGXG motif repeats span residues 148–155 (CKTCDGSG), 165–172 (CTTCGGIG), 187–194 (CPRCHGSG), and 201–208 (CGSCHGQG).

The protein belongs to the DnaJ family. Homodimer. Zn(2+) is required as a cofactor.

It is found in the cytoplasm. Its function is as follows. Participates actively in the response to hyperosmotic and heat shock by preventing the aggregation of stress-denatured proteins and by disaggregating proteins, also in an autonomous, DnaK-independent fashion. Unfolded proteins bind initially to DnaJ; upon interaction with the DnaJ-bound protein, DnaK hydrolyzes its bound ATP, resulting in the formation of a stable complex. GrpE releases ADP from DnaK; ATP binding to DnaK triggers the release of the substrate protein, thus completing the reaction cycle. Several rounds of ATP-dependent interactions between DnaJ, DnaK and GrpE are required for fully efficient folding. Also involved, together with DnaK and GrpE, in the DNA replication of plasmids through activation of initiation proteins. This Stutzerimonas stutzeri (Pseudomonas stutzeri) protein is Chaperone protein DnaJ.